The sequence spans 569 residues: Alpha-amylase (569 aa).

Positions 1–28 are cleaved as a signal peptide; the sequence is MARKTVAAALALVAGAAVAVTGNAPAQA. Ca(2+) contacts are provided by N120, Q166, and D175. Residue D205 is the Nucleophile of the active site. H209 contacts Ca(2+). E232 functions as the Proton donor in the catalytic mechanism. One can recognise a CBM20 domain in the interval 468–569; sequence TTPPATSGAS…QLVLNDTFRS (102 aa).

This sequence belongs to the glycosyl hydrolase 13 family. In terms of assembly, monomer. It depends on Ca(2+) as a cofactor.

It catalyses the reaction Endohydrolysis of (1-&gt;4)-alpha-D-glucosidic linkages in polysaccharides containing three or more (1-&gt;4)-alpha-linked D-glucose units.. In Streptomyces violaceus (Streptomyces venezuelae), this protein is Alpha-amylase (aml).